Here is a 115-residue protein sequence, read N- to C-terminus: NADH-ubiquinone oxidoreductase chain 3 (115 aa).

3 helical membrane passes run 3-23 (LMLT…IAFW), 55-75 (FFLV…LLPL), and 84-104 (LNTM…SLAY).

Belongs to the complex I subunit 3 family. In terms of assembly, core subunit of respiratory chain NADH dehydrogenase (Complex I) which is composed of 45 different subunits. Interacts with TMEM186. Interacts with TMEM242.

The protein resides in the mitochondrion inner membrane. The catalysed reaction is a ubiquinone + NADH + 5 H(+)(in) = a ubiquinol + NAD(+) + 4 H(+)(out). Its function is as follows. Core subunit of the mitochondrial membrane respiratory chain NADH dehydrogenase (Complex I) which catalyzes electron transfer from NADH through the respiratory chain, using ubiquinone as an electron acceptor. Essential for the catalytic activity of complex I. The chain is NADH-ubiquinone oxidoreductase chain 3 from Equus caballus (Horse).